The following is a 618-amino-acid chain: Indolepyruvate oxidoreductase subunit IorA (618 aa).

4Fe-4S ferredoxin-type domains lie at 559–590 (RPVR…DGRV) and 588–617 (GRVF…PEGK). [4Fe-4S] cluster is bound by residues cysteine 568, cysteine 571, cysteine 574, cysteine 580, cysteine 597, cysteine 600, cysteine 603, and cysteine 607.

As to quaternary structure, heterodimer of the IorA and IorB subunits. [4Fe-4S] cluster serves as cofactor.

It catalyses the reaction indole-3-pyruvate + 2 oxidized [2Fe-2S]-[ferredoxin] + CoA = (indol-3-yl)acetyl-CoA + 2 reduced [2Fe-2S]-[ferredoxin] + CO2 + H(+). Its function is as follows. Catalyzes the ferredoxin-dependent oxidative decarboxylation of arylpyruvates. This is Indolepyruvate oxidoreductase subunit IorA (iorA) from Methanothermobacter marburgensis (strain ATCC BAA-927 / DSM 2133 / JCM 14651 / NBRC 100331 / OCM 82 / Marburg) (Methanobacterium thermoautotrophicum).